The chain runs to 98 residues: Prostate and testis expressed protein 3 (98 aa).

Residues 1-20 form the signal peptide; that stretch reads MNKHFLLLFSLFYFIVEATS. Residues 21-97 enclose the UPAR/Ly6 domain; sequence LKCVTCHLRT…CCNSDFCNFR (77 aa). Disulfide bonds link cysteine 23–cysteine 50, cysteine 26–cysteine 35, cysteine 42–cysteine 68, and cysteine 72–cysteine 88.

The protein belongs to the PATE family.

It localises to the secreted. This Mus musculus (Mouse) protein is Prostate and testis expressed protein 3 (Pate3).